The following is a 405-amino-acid chain: Pyruvate decarboxylase 2 (405 aa).

The thiamine pyrophosphate binding stretch occupies residues 232 to 314 (DSWFNCQKLK…FLINNGGYTI (83 aa)). Mg(2+) is bound by residues Asp-282, Asn-309, and Gly-311. Glu-315 contacts substrate.

The protein belongs to the TPP enzyme family. In terms of assembly, homotetramer. It depends on a metal cation as a cofactor. The cofactor is thiamine diphosphate.

The catalysed reaction is a 2-oxocarboxylate + H(+) = an aldehyde + CO2. The polypeptide is Pyruvate decarboxylase 2 (PDC2) (Pisum sativum (Garden pea)).